Consider the following 142-residue polypeptide: Large ribosomal subunit protein uL23 (142 aa).

Lysine 61 participates in a covalent cross-link: Glycyl lysine isopeptide (Lys-Gly) (interchain with G-Cter in SUMO).

This sequence belongs to the universal ribosomal protein uL23 family. Component of the large ribosomal subunit (LSU). Mature yeast ribosomes consist of a small (40S) and a large (60S) subunit. The 40S small subunit contains 1 molecule of ribosomal RNA (18S rRNA) and 33 different proteins (encoded by 57 genes). The large 60S subunit contains 3 rRNA molecules (25S, 5.8S and 5S rRNA) and 46 different proteins (encoded by 81 genes). uL23 is associated with the polypeptide exit tunnel.

The protein resides in the cytoplasm. Its function is as follows. Component of the ribosome, a large ribonucleoprotein complex responsible for the synthesis of proteins in the cell. The small ribosomal subunit (SSU) binds messenger RNAs (mRNAs) and translates the encoded message by selecting cognate aminoacyl-transfer RNA (tRNA) molecules. The large subunit (LSU) contains the ribosomal catalytic site termed the peptidyl transferase center (PTC), which catalyzes the formation of peptide bonds, thereby polymerizing the amino acids delivered by tRNAs into a polypeptide chain. The nascent polypeptides leave the ribosome through a tunnel in the LSU and interact with protein factors that function in enzymatic processing, targeting, and the membrane insertion of nascent chains at the exit of the ribosomal tunnel. uL23 is a major component of the universal docking site for these factors at the polypeptide exit tunnel. The polypeptide is Large ribosomal subunit protein uL23 (Saccharomyces cerevisiae (strain ATCC 204508 / S288c) (Baker's yeast)).